The following is a 189-amino-acid chain: UPF0301 protein RT0098 (189 aa).

This sequence belongs to the UPF0301 (AlgH) family.

The polypeptide is UPF0301 protein RT0098 (Rickettsia typhi (strain ATCC VR-144 / Wilmington)).